A 307-amino-acid polypeptide reads, in one-letter code: Ornithine carbamoyltransferase (307 aa).

Carbamoyl phosphate-binding positions include 50–53 (STRT), Q77, R101, and 128–131 (HPCQ). Residues N160, D224, and 228–229 (SM) each bind L-ornithine. Residues 264 to 265 (CL) and R292 contribute to the carbamoyl phosphate site.

This sequence belongs to the aspartate/ornithine carbamoyltransferase superfamily. OTCase family. As to quaternary structure, homotrimer.

The protein resides in the cytoplasm. The enzyme catalyses carbamoyl phosphate + L-ornithine = L-citrulline + phosphate + H(+). Its pathway is amino-acid biosynthesis; L-arginine biosynthesis; L-arginine from L-ornithine and carbamoyl phosphate: step 1/3. In terms of biological role, reversibly catalyzes the transfer of the carbamoyl group from carbamoyl phosphate (CP) to the N(epsilon) atom of ornithine (ORN) to produce L-citrulline, which is a substrate for argininosuccinate synthetase, the enzyme involved in the final step in arginine biosynthesis. This chain is Ornithine carbamoyltransferase (argF), found in Mycobacterium bovis (strain ATCC BAA-935 / AF2122/97).